Here is a 224-residue protein sequence, read N- to C-terminus: Deoxyribose-phosphate aldolase (224 aa).

D91 (proton donor/acceptor) is an active-site residue. The active-site Schiff-base intermediate with acetaldehyde is K152. K181 (proton donor/acceptor) is an active-site residue.

This sequence belongs to the DeoC/FbaB aldolase family. DeoC type 1 subfamily.

The protein localises to the cytoplasm. The catalysed reaction is 2-deoxy-D-ribose 5-phosphate = D-glyceraldehyde 3-phosphate + acetaldehyde. Its pathway is carbohydrate degradation; 2-deoxy-D-ribose 1-phosphate degradation; D-glyceraldehyde 3-phosphate and acetaldehyde from 2-deoxy-alpha-D-ribose 1-phosphate: step 2/2. Catalyzes a reversible aldol reaction between acetaldehyde and D-glyceraldehyde 3-phosphate to generate 2-deoxy-D-ribose 5-phosphate. In Mycoplasma pneumoniae (strain ATCC 29342 / M129 / Subtype 1) (Mycoplasmoides pneumoniae), this protein is Deoxyribose-phosphate aldolase.